The following is a 275-amino-acid chain: Protein COFACTOR ASSEMBLY OF COMPLEX C SUBUNIT B CCB2, chloroplastic (275 aa).

The N-terminal 19 residues, 1-19 (MSIQICNFPFHPKFALQPR), are a transit peptide targeting the chloroplast. The Stromal portion of the chain corresponds to 20–65 (AQRSTRIFARTENDSPQSKTSDQQLNLSVLRFTFGIPGFDESYLPR). Residues 66–86 (WIGYGFGSLLLLNHFSASAPI) form a helical membrane-spanning segment. The Lumenal segment spans residues 87 to 93 (SESQMRS). A helical membrane pass occupies residues 94–114 (EALGLSLAAFSIALPYIGKFL). The Stromal segment spans residues 115–275 (KGSVVEQRSL…IGAMAEKFRG (161 aa)).

It is found in the plastid. Its subcellular location is the chloroplast thylakoid membrane. Required for the biogenesis and accumulation of native cytochrome b6 in the thylakoid membrane. Controls the conversion of apocytochrome b6 to holocytochrome b6. Required for covalent binding of the c-type heme to cytochrome b6. The chain is Protein COFACTOR ASSEMBLY OF COMPLEX C SUBUNIT B CCB2, chloroplastic from Arabidopsis thaliana (Mouse-ear cress).